A 264-amino-acid chain; its full sequence is Teichoic acids export ATP-binding protein TagH (264 aa).

The ABC transporter domain maps to 5-243; the sequence is VNIKNVTKEY…YEAFLNDFKK (239 aa). An ATP-binding site is contributed by 57–64; the sequence is GINGSGKS.

The protein belongs to the ABC transporter superfamily. Teichoic acids exporter (TC 3.A.1.104.1) family. As to quaternary structure, the complex is composed of two ATP-binding proteins (TagH) and two transmembrane proteins (TagG).

The protein resides in the cell membrane. It carries out the reaction ATP + H2O + teichoic acidSide 1 = ADP + phosphate + teichoic acidSide 2.. Functionally, part of the ABC transporter complex TagGH involved in teichoic acids export. Responsible for energy coupling to the transport system. This Staphylococcus aureus (strain USA300) protein is Teichoic acids export ATP-binding protein TagH.